Consider the following 354-residue polypeptide: NADH-quinone oxidoreductase subunit H (354 aa).

The next 8 helical transmembrane spans lie at 25–45, 91–111, 126–146, 170–190, 205–225, 253–273, 290–310, and 330–350; these read LVRILVVAVVILLCVAYLILW, WLYLVAPVMTVVPAFAVWAVI, LLYAMAISSIGVYAVILAGWA, MGFALVLVLMTAGSLNLSEIV, FLSWNWLPLLPVFVIYFISGI, MAFALFFLAEYINMIVISALA, FIPGIFWLVLKIFALLSVFIW, and VFLPVCVFWVIVVGFWMMSPL.

This sequence belongs to the complex I subunit 1 family. In terms of assembly, NDH-1 is composed of 14 different subunits. Subunits NuoA, H, J, K, L, M, N constitute the membrane sector of the complex.

It is found in the cell inner membrane. It carries out the reaction a quinone + NADH + 5 H(+)(in) = a quinol + NAD(+) + 4 H(+)(out). Its function is as follows. NDH-1 shuttles electrons from NADH, via FMN and iron-sulfur (Fe-S) centers, to quinones in the respiratory chain. The immediate electron acceptor for the enzyme in this species is believed to be ubiquinone. Couples the redox reaction to proton translocation (for every two electrons transferred, four hydrogen ions are translocated across the cytoplasmic membrane), and thus conserves the redox energy in a proton gradient. This subunit may bind ubiquinone. This is NADH-quinone oxidoreductase subunit H from Burkholderia mallei (strain ATCC 23344).